We begin with the raw amino-acid sequence, 160 residues long: Large ribosomal subunit protein bL9 (160 aa).

It belongs to the bacterial ribosomal protein bL9 family.

Functionally, binds to the 23S rRNA. The polypeptide is Large ribosomal subunit protein bL9 (Neorickettsia sennetsu (strain ATCC VR-367 / Miyayama) (Ehrlichia sennetsu)).